Consider the following 327-residue polypeptide: 1-aminocyclopropane-1-carboxylate oxidase 1 (327 aa).

Residues 157–257 (PTFGTKVSNY…RMSIASFYNP (101 aa)) form the Fe2OG dioxygenase domain. The Fe cation site is built by His-181, Asp-183, and His-238.

The protein belongs to the iron/ascorbate-dependent oxidoreductase family. The cofactor is Fe cation.

The catalysed reaction is 1-aminocyclopropane-1-carboxylate + L-ascorbate + O2 = ethene + L-dehydroascorbate + hydrogen cyanide + CO2 + 2 H2O. Its pathway is alkene biosynthesis; ethylene biosynthesis via S-adenosyl-L-methionine; ethylene from S-adenosyl-L-methionine: step 2/2. In Doritaenopsis sp. (Moth orchid), this protein is 1-aminocyclopropane-1-carboxylate oxidase 1 (ACO1).